An 842-amino-acid polypeptide reads, in one-letter code: Translation initiation factor IF-2 (842 aa).

Disordered stretches follow at residues 42-91 (ETKR…NLSS) and 139-253 (LQKQ…NQEP). Basic and acidic residues-rich tracts occupy residues 176 to 190 (IEKR…EERH) and 199 to 214 (SEIR…DERR). A tr-type G domain is found at 340-509 (PRPPVVTIMG…LLQAEMLDLK (170 aa)). The segment at 349 to 356 (GHVDHGKT) is G1. 349–356 (GHVDHGKT) is a GTP binding site. The tract at residues 374 to 378 (GITQH) is G2. Positions 395-398 (DTPG) are G3. GTP is bound by residues 395-399 (DTPGH) and 449-452 (NKID). Residues 449-452 (NKID) form a G4 region. Positions 485-487 (SAK) are G5.

Belongs to the TRAFAC class translation factor GTPase superfamily. Classic translation factor GTPase family. IF-2 subfamily.

It localises to the cytoplasm. Its function is as follows. One of the essential components for the initiation of protein synthesis. Protects formylmethionyl-tRNA from spontaneous hydrolysis and promotes its binding to the 30S ribosomal subunits. Also involved in the hydrolysis of GTP during the formation of the 70S ribosomal complex. In Bartonella tribocorum (strain CIP 105476 / IBS 506), this protein is Translation initiation factor IF-2.